The sequence spans 420 residues: Tyrosine--tRNA ligase (420 aa).

Tyr33 contributes to the L-tyrosine binding site. Positions 38–47 (PTGDSLHAGH) match the 'HIGH' region motif. Positions 167 and 171 each coordinate L-tyrosine. A 'KMSKS' region motif is present at residues 227–231 (KFGKS). Lys230 is an ATP binding site. The S4 RNA-binding domain occupies 352–418 (PTIIDLLIGA…GKKNFAGVKY (67 aa)).

This sequence belongs to the class-I aminoacyl-tRNA synthetase family. TyrS type 1 subfamily. Homodimer.

The protein localises to the cytoplasm. The enzyme catalyses tRNA(Tyr) + L-tyrosine + ATP = L-tyrosyl-tRNA(Tyr) + AMP + diphosphate + H(+). In terms of biological role, catalyzes the attachment of tyrosine to tRNA(Tyr) in a two-step reaction: tyrosine is first activated by ATP to form Tyr-AMP and then transferred to the acceptor end of tRNA(Tyr). This is Tyrosine--tRNA ligase from Corynebacterium diphtheriae (strain ATCC 700971 / NCTC 13129 / Biotype gravis).